The chain runs to 272 residues: 2-dehydro-3-deoxyphosphooctonate aldolase (272 aa).

It belongs to the KdsA family.

It localises to the cytoplasm. It catalyses the reaction D-arabinose 5-phosphate + phosphoenolpyruvate + H2O = 3-deoxy-alpha-D-manno-2-octulosonate-8-phosphate + phosphate. It functions in the pathway carbohydrate biosynthesis; 3-deoxy-D-manno-octulosonate biosynthesis; 3-deoxy-D-manno-octulosonate from D-ribulose 5-phosphate: step 2/3. Its pathway is bacterial outer membrane biogenesis; lipopolysaccharide biosynthesis. The polypeptide is 2-dehydro-3-deoxyphosphooctonate aldolase (Geotalea daltonii (strain DSM 22248 / JCM 15807 / FRC-32) (Geobacter daltonii)).